Reading from the N-terminus, the 275-residue chain is Large ribosomal subunit protein uL2 (275 aa).

The segment covering 28–38 (EPYAPLLDKKS) has biased composition (basic and acidic residues). Disordered stretches follow at residues 28 to 55 (EPYA…RHVG) and 224 to 258 (AMNP…GYKT).

The protein belongs to the universal ribosomal protein uL2 family. Part of the 50S ribosomal subunit. Forms a bridge to the 30S subunit in the 70S ribosome.

One of the primary rRNA binding proteins. Required for association of the 30S and 50S subunits to form the 70S ribosome, for tRNA binding and peptide bond formation. It has been suggested to have peptidyltransferase activity; this is somewhat controversial. Makes several contacts with the 16S rRNA in the 70S ribosome. The polypeptide is Large ribosomal subunit protein uL2 (Cellvibrio japonicus (strain Ueda107) (Pseudomonas fluorescens subsp. cellulosa)).